Here is a 137-residue protein sequence, read N- to C-terminus: Small ribosomal subunit protein uS9 (137 aa).

Residues 105–137 (LKTEGYLKRDPRAVERKKYGLRKARKAPQYSKR) are disordered. Basic and acidic residues predominate over residues 109–122 (GYLKRDPRAVERKK). Residues 123 to 137 (YGLRKARKAPQYSKR) show a composition bias toward basic residues.

Belongs to the universal ribosomal protein uS9 family.

In Synechococcus sp. (strain JA-3-3Ab) (Cyanobacteria bacterium Yellowstone A-Prime), this protein is Small ribosomal subunit protein uS9.